A 298-amino-acid polypeptide reads, in one-letter code: Putative ankyrin repeat-containing protein TP_0502 (298 aa).

ANK repeat units follow at residues 143–172 (CFEE…SAAL), 176–205 (RGTP…PVDQ), 210–239 (RAYS…DPNV), and 243–272 (NGQT…NPYL).

This chain is Putative ankyrin repeat-containing protein TP_0502, found in Treponema pallidum (strain Nichols).